The sequence spans 425 residues: Keratin, type II cytoskeletal I (425 aa).

Positions 1 to 16 are coil 1A; it reads FLEQQNKVLETKWKLL. Residues 1-296 enclose the IF rod domain; sequence FLEQQNKVLE…YMLEGEEGRI (296 aa). The tract at residues 17 to 37 is linker 1; the sequence is QEQGTKGTTKRANLDPLFEKY. Positions 38 to 129 are coil 1B; sequence IADLKKYLDN…TRDAAELSQV (92 aa). The interval 130–153 is linker 12; that stretch reads HDQVTDTSVVLTMDNNRDLNLDSI. A coil 2 region spans residues 154 to 292; the sequence is IKEVKCQYEQ…STYRYMLEGE (139 aa). The tail stretch occupies residues 293–425; the sequence is EGRISGQIVN…STTSTTKKTY (133 aa).

It belongs to the intermediate filament family. In terms of assembly, heterotetramer of two type I and two type II keratins.

The protein is Keratin, type II cytoskeletal I of Xenopus laevis (African clawed frog).